We begin with the raw amino-acid sequence, 184 residues long: RNA polymerase sigma factor HrpL (184 aa).

A Polymerase core binding motif is present at residues 49–62; the sequence is DILQCVFLEALRNE. A DNA-binding region (H-T-H motif) is located at residues 151–170; that stretch reads YQETANTLGVPIGTVRSRLS.

Belongs to the sigma-70 factor family. ECF subfamily.

Sigma factors are initiation factors that promote the attachment of RNA polymerase to specific initiation sites and are then released. This sigma factor is involved in the activation of hprD as well as other hrp loci which are involved in plant pathogenicity, hrmA and avr genes. The chain is RNA polymerase sigma factor HrpL (hrpL) from Pseudomonas syringae pv. syringae.